The sequence spans 437 residues: Keratin, type I cytoskeletal 13 (437 aa).

Residues 1 to 95 (MSCRFQSSSM…GVDGGLLSGN (95 aa)) are head. Arg-27 and Arg-35 each carry omega-N-methylarginine. The interval 96 to 131 (EKITMQNLNDRLASYLDKVRALEAANADLEVKIRDW) is coil 1A. The 313-residue stretch at 96–408 (EKITMQNLND…SLLEGQDAKM (313 aa)) folds into the IF rod domain. The tract at residues 132 to 150 (HLKQSPASPERDYSAYYKT) is linker 1. The segment at 151–242 (IEELRIKILE…KNHEEEMKEF (92 aa)) is coil 1B. Residues 243–265 (SNQVVGQVNVEMDATPGIDLTRV) form a linker 12 region. Residues 266 to 404 (LAEMREQYEA…ATYRSLLEGQ (139 aa)) are coil 2. Residues 405 to 437 (DAKMTGFNSGGNNTTTSNGSPSSNSGRPDFRKY) are tail. A disordered region spans residues 408 to 437 (MTGFNSGGNNTTTSNGSPSSNSGRPDFRKY). A compositionally biased stretch (low complexity) spans 409 to 430 (TGFNSGGNNTTTSNGSPSSNSG).

The protein belongs to the intermediate filament family. Heterotetramer of two type I and two type II keratins. In terms of processing, O-glycosylated; glycans consist of single N-acetylglucosamine residues. As to expression, expressed in tongue epithelia (at protein level). Expressed in upper suprabasal layers of the corneal epithelium (at protein level).

Its function is as follows. Type 1 keratin. Maintains postnatal tongue mucosal cell homeostasis and tissue organization in response to mechanical stress, potentially via regulation of the G1/S phase cyclins CCNE1 and CCNE2. This chain is Keratin, type I cytoskeletal 13 (Krt13), found in Mus musculus (Mouse).